The primary structure comprises 261 residues: Carbonic anhydrase 1 (261 aa).

N-acetylalanine is present on Ala2. Positions 4-261 constitute an Alpha-carbonic anhydrase domain; the sequence is PDWGYDGENG…LNGRTVKASF (258 aa). The active-site Proton donor/acceptor is His65. Positions 95, 97, and 120 each coordinate Zn(2+). Substrate-binding positions include Thr200 and 200 to 201; that span reads TH.

This sequence belongs to the alpha-carbonic anhydrase family. Zn(2+) is required as a cofactor.

It localises to the cytoplasm. It carries out the reaction hydrogencarbonate + H(+) = CO2 + H2O. The catalysed reaction is urea = cyanamide + H2O. Its activity is regulated as follows. Inhibited by acetazolamide. Catalyzes the reversible hydration of carbon dioxide. Can hydrate cyanamide to urea. The chain is Carbonic anhydrase 1 (CA1) from Bos taurus (Bovine).